The primary structure comprises 137 residues: Large ribosomal subunit protein uL16 (137 aa).

Belongs to the universal ribosomal protein uL16 family. As to quaternary structure, part of the 50S ribosomal subunit.

Binds 23S rRNA and is also seen to make contacts with the A and possibly P site tRNAs. The chain is Large ribosomal subunit protein uL16 from Wolbachia pipientis wMel.